We begin with the raw amino-acid sequence, 579 residues long: Membrane frizzled-related protein (579 aa).

At 1–69 (MKDFSDVILC…RPDCRFSWLC (69 aa)) the chain is on the cytoplasmic side. The chain crosses the membrane as a helical; Signal-anchor for type II membrane protein span at residues 70–90 (VLLLSSLLLLLLGLLVAIILA). Residues 91–579 (QLQAAPPSGA…AADLEACAQP (489 aa)) lie on the Extracellular side of the membrane. The interval 100–143 (ASHSPLPAGGLTTTTTTPTITTSQAAGTPKGQQESGVSPSPQST) is disordered. Positions 111–121 (TTTTTTPTITT) are enriched in low complexity. The span at 122–143 (SQAAGTPKGQQESGVSPSPQST) shows a compositional bias: polar residues. 2 disulfides stabilise this stretch: Cys-144–Cys-170 and Cys-197–Cys-216. In terms of domain architecture, CUB 1 spans 144–253 (CGGLLSGPRG…FGFHAWYQAM (110 aa)). Asn-227 carries N-linked (GlcNAc...) asparagine glycosylation. The 37-residue stretch at 259-295 (SCAHDEFRCDQLICLLPDSVCDGFANCADGSDETNCS) folds into the LDL-receptor class A 1 domain. 5 cysteine pairs are disulfide-bonded: Cys-260-Cys-272, Cys-267-Cys-285, Cys-279-Cys-294, Cys-301-Cys-327, and Cys-354-Cys-377. The CUB 2 domain occupies 301–414 (CGGNLTGLQG…GGFSATYLAF (114 aa)). Asn-415 is a glycosylation site (N-linked (GlcNAc...) asparagine). The LDL-receptor class A 2 domain maps to 420–455 (PCGPSELSCQAGGCKGVQWMCDMWRDCTDGSDDNCS). 8 cysteine pairs are disulfide-bonded: Cys-421-Cys-433, Cys-428-Cys-446, Cys-440-Cys-454, Cys-466-Cys-528, Cys-474-Cys-521, Cys-512-Cys-549, Cys-538-Cys-576, and Cys-542-Cys-564. One can recognise an FZ domain in the interval 461-579 (PPELACEPVQ…AADLEACAQP (119 aa)).

As to quaternary structure, interacts with C1QTNF5. As to expression, specifically expressed in brain. Strongly expressed in medulla oblongata and to a lower extent in hippocampus and corpus callosum. Expressed in keratinocytes.

The protein localises to the apical cell membrane. Functionally, may play a role in eye development. This Homo sapiens (Human) protein is Membrane frizzled-related protein (MFRP).